We begin with the raw amino-acid sequence, 367 residues long: F-box only protein 25 (367 aa).

The interval 1–83 is interaction with beta-actin; that stretch reads MPFLGQDWRS…NDTNTQSFYR (83 aa). Residues 226-274 form the F-box domain; it reads LTLSDLPLHMLNNILYRFSDGWDIITLGQVTPTLYMLSEDRQLWKKLCQ.

As to quaternary structure, part of a SCF (SKP1-cullin-F-box) protein ligase complex consisting of FBXO25, SKP1, CUL1 and RBX1. Interacts directly with SKP1 and CUL1. Interacts (via C-terminus) with beta-actin (via N-terminus). As to expression, expressed in all brain tissue observed.

The protein localises to the nucleus. The protein operates within protein modification; protein ubiquitination. Its function is as follows. Substrate-recognition component of the SCF (SKP1-CUL1-F-box protein)-type E3 ubiquitin ligase complex. May play a role in accumulation of expanded polyglutamine (polyQ) protein huntingtin (HTT). The sequence is that of F-box only protein 25 (FBXO25) from Homo sapiens (Human).